A 133-amino-acid chain; its full sequence is Small ribosomal subunit protein uS8 (133 aa).

The protein belongs to the universal ribosomal protein uS8 family. Part of the 30S ribosomal subunit.

One of the primary rRNA binding proteins, it binds directly to 16S rRNA central domain where it helps coordinate assembly of the platform of the 30S subunit. In Staphylothermus marinus (strain ATCC 43588 / DSM 3639 / JCM 9404 / F1), this protein is Small ribosomal subunit protein uS8.